A 105-amino-acid chain; its full sequence is DNA-directed RNA polymerase subunit omega (105 aa).

It belongs to the RNA polymerase subunit omega family. As to quaternary structure, the RNAP catalytic core consists of 2 alpha, 1 beta, 1 beta' and 1 omega subunit. When a sigma factor is associated with the core the holoenzyme is formed, which can initiate transcription.

It carries out the reaction RNA(n) + a ribonucleoside 5'-triphosphate = RNA(n+1) + diphosphate. Functionally, promotes RNA polymerase assembly. Latches the N- and C-terminal regions of the beta' subunit thereby facilitating its interaction with the beta and alpha subunits. The sequence is that of DNA-directed RNA polymerase subunit omega from Streptococcus equi subsp. zooepidemicus (strain MGCS10565).